Consider the following 395-residue polypeptide: 1-deoxy-D-xylulose 5-phosphate reductoisomerase (395 aa).

Residues Thr10, Gly11, Ser12, Ile13, Asn38, and Asn123 each contribute to the NADPH site. Lys124 lines the 1-deoxy-D-xylulose 5-phosphate pocket. Glu125 serves as a coordination point for NADPH. Asp149 lines the Mn(2+) pocket. Positions 150, 151, 185, and 208 each coordinate 1-deoxy-D-xylulose 5-phosphate. Glu151 lines the Mn(2+) pocket. Gly214 provides a ligand contact to NADPH. Residues Ser221, Asn226, Lys227, and Glu230 each coordinate 1-deoxy-D-xylulose 5-phosphate. Residue Glu230 participates in Mn(2+) binding.

This sequence belongs to the DXR family. Mg(2+) is required as a cofactor. The cofactor is Mn(2+).

It carries out the reaction 2-C-methyl-D-erythritol 4-phosphate + NADP(+) = 1-deoxy-D-xylulose 5-phosphate + NADPH + H(+). Its pathway is isoprenoid biosynthesis; isopentenyl diphosphate biosynthesis via DXP pathway; isopentenyl diphosphate from 1-deoxy-D-xylulose 5-phosphate: step 1/6. Functionally, catalyzes the NADPH-dependent rearrangement and reduction of 1-deoxy-D-xylulose-5-phosphate (DXP) to 2-C-methyl-D-erythritol 4-phosphate (MEP). The sequence is that of 1-deoxy-D-xylulose 5-phosphate reductoisomerase from Shewanella woodyi (strain ATCC 51908 / MS32).